Reading from the N-terminus, the 332-residue chain is Aspartate carbamoyltransferase catalytic subunit (332 aa).

Residues Arg54 and Thr55 each coordinate carbamoyl phosphate. Residue Lys82 coordinates L-aspartate. Carbamoyl phosphate-binding residues include Arg104, His134, and Gln137. Arg175 and Arg230 together coordinate L-aspartate. Carbamoyl phosphate contacts are provided by Gly271 and Pro272. Residues Gly312–Pro332 are disordered.

Belongs to the aspartate/ornithine carbamoyltransferase superfamily. ATCase family. Heterododecamer (2C3:3R2) of six catalytic PyrB chains organized as two trimers (C3), and six regulatory PyrI chains organized as three dimers (R2).

It carries out the reaction carbamoyl phosphate + L-aspartate = N-carbamoyl-L-aspartate + phosphate + H(+). It functions in the pathway pyrimidine metabolism; UMP biosynthesis via de novo pathway; (S)-dihydroorotate from bicarbonate: step 2/3. Catalyzes the condensation of carbamoyl phosphate and aspartate to form carbamoyl aspartate and inorganic phosphate, the committed step in the de novo pyrimidine nucleotide biosynthesis pathway. The sequence is that of Aspartate carbamoyltransferase catalytic subunit from Beutenbergia cavernae (strain ATCC BAA-8 / DSM 12333 / CCUG 43141 / JCM 11478 / NBRC 16432 / NCIMB 13614 / HKI 0122).